The chain runs to 636 residues: Probable potassium transport system protein Kup (636 aa).

The next 12 helical transmembrane spans lie at 22-42, 64-84, 115-135, 150-170, 182-202, 220-240, 261-281, 293-313, 351-371, 383-403, 408-428, and 433-453; these read VGLL…SPLY, ILSL…VMFI, LMVI…MITP, FDGI…ALFL, LFGP…VHGI, FFVV…LALT, WFIL…ALLL, LLAP…ATVI, IYIG…VIGF, VAVT…MLLL, PLLA…FFAA, and IAQG…LMST.

It belongs to the HAK/KUP transporter (TC 2.A.72) family.

It is found in the cell inner membrane. The enzyme catalyses K(+)(in) + H(+)(in) = K(+)(out) + H(+)(out). Transport of potassium into the cell. Likely operates as a K(+):H(+) symporter. This chain is Probable potassium transport system protein Kup, found in Pseudomonas putida (strain ATCC 47054 / DSM 6125 / CFBP 8728 / NCIMB 11950 / KT2440).